We begin with the raw amino-acid sequence, 32 residues long: Sodium channel neurotoxin BmK NT2 (32 aa).

One can recognise an LCN-type CS-alpha/beta domain in the interval 2–32 (RDAYIAKPENCVYHCAGNEGCNNLCTCNGAT).

In terms of tissue distribution, expressed by the venom gland.

The protein localises to the secreted. Alpha toxins bind voltage-independently at site-3 of sodium channels (Nav) and inhibit the inactivation of the activated channels, thereby blocking neuronal transmission. This toxin dose-dependently delays inactivation of voltage-gated sodium channels (Nav) (EC(50)=0.91 uM), and shifts the steady-state activation and inactivation to hyperpolarized direction. In addition, it dose-dependently alters calcium dynamics and increases phosphorylation of MAP kinases 1/3 (MAPK1/MAPK3) and cAMP-response element binding (CREB) proteins in neocortical neurons. This effect is eliminated by tetrodotoxin, a Nav blocker. In Olivierus martensii (Manchurian scorpion), this protein is Sodium channel neurotoxin BmK NT2.